Consider the following 124-residue polypeptide: Small ribosomal subunit protein uS12 (124 aa).

Asp89 carries the post-translational modification 3-methylthioaspartic acid. A disordered region spans residues 105 to 124; sequence TGVDSRMQGRSKYGTKKPKK.

This sequence belongs to the universal ribosomal protein uS12 family. Part of the 30S ribosomal subunit. Contacts proteins S8 and S17. May interact with IF1 in the 30S initiation complex.

With S4 and S5 plays an important role in translational accuracy. Its function is as follows. Interacts with and stabilizes bases of the 16S rRNA that are involved in tRNA selection in the A site and with the mRNA backbone. Located at the interface of the 30S and 50S subunits, it traverses the body of the 30S subunit contacting proteins on the other side and probably holding the rRNA structure together. The combined cluster of proteins S8, S12 and S17 appears to hold together the shoulder and platform of the 30S subunit. The protein is Small ribosomal subunit protein uS12 of Vesicomyosocius okutanii subsp. Calyptogena okutanii (strain HA).